Here is a 101-residue protein sequence, read N- to C-terminus: Small ribosomal subunit protein cS23 (101 aa).

This sequence belongs to the chloroplast-specific ribosomal protein cS23 family. In terms of assembly, part of the 30S ribosomal subunit.

The protein resides in the plastid. Its subcellular location is the chloroplast. Probably a ribosomal protein or a ribosome-associated protein. The chain is Small ribosomal subunit protein cS23 (ycf65) from Cyanidium caldarium (Red alga).